We begin with the raw amino-acid sequence, 224 residues long: Endonuclease NucS (224 aa).

It belongs to the NucS endonuclease family.

The protein resides in the cytoplasm. Its function is as follows. Cleaves both 3' and 5' ssDNA extremities of branched DNA structures. This is Endonuclease NucS from Rhodococcus erythropolis (strain PR4 / NBRC 100887).